We begin with the raw amino-acid sequence, 364 residues long: tRNA 2-selenouridine synthase (364 aa).

The Rhodanese domain maps to 14–137; the sequence is LIADTPIIDV…LRQTAIQATI (124 aa). The S-selanylcysteine intermediate role is filled by Cys97.

Belongs to the SelU family. In terms of assembly, monomer.

It catalyses the reaction 5-methylaminomethyl-2-thiouridine(34) in tRNA + selenophosphate + (2E)-geranyl diphosphate + H2O + H(+) = 5-methylaminomethyl-2-selenouridine(34) in tRNA + (2E)-thiogeraniol + phosphate + diphosphate. The catalysed reaction is 5-methylaminomethyl-2-thiouridine(34) in tRNA + (2E)-geranyl diphosphate = 5-methylaminomethyl-S-(2E)-geranyl-thiouridine(34) in tRNA + diphosphate. It carries out the reaction 5-methylaminomethyl-S-(2E)-geranyl-thiouridine(34) in tRNA + selenophosphate + H(+) = 5-methylaminomethyl-2-(Se-phospho)selenouridine(34) in tRNA + (2E)-thiogeraniol. The enzyme catalyses 5-methylaminomethyl-2-(Se-phospho)selenouridine(34) in tRNA + H2O = 5-methylaminomethyl-2-selenouridine(34) in tRNA + phosphate. Involved in the post-transcriptional modification of the uridine at the wobble position (U34) of tRNA(Lys), tRNA(Glu) and tRNA(Gln). Catalyzes the conversion of 2-thiouridine (S2U-RNA) to 2-selenouridine (Se2U-RNA). Acts in a two-step process involving geranylation of 2-thiouridine (S2U) to S-geranyl-2-thiouridine (geS2U) and subsequent selenation of the latter derivative to 2-selenouridine (Se2U) in the tRNA chain. This chain is tRNA 2-selenouridine synthase, found in Escherichia coli (strain K12 / MC4100 / BW2952).